The primary structure comprises 284 residues: Acetyl-coenzyme A carboxylase carboxyl transferase subunit beta (284 aa).

The CoA carboxyltransferase N-terminal domain maps to 25-284 (LWTKCPKCES…ICRMLLQKSA (260 aa)). Residues Cys-29, Cys-32, Cys-48, and Cys-51 each coordinate Zn(2+). The segment at 29–51 (CPKCESTLYRAEVRRNLEVCPKC) adopts a C4-type zinc-finger fold.

Belongs to the AccD/PCCB family. Acetyl-CoA carboxylase is a heterohexamer composed of biotin carboxyl carrier protein (AccB), biotin carboxylase (AccC) and two subunits each of ACCase subunit alpha (AccA) and ACCase subunit beta (AccD). Zn(2+) serves as cofactor.

The protein resides in the cytoplasm. It carries out the reaction N(6)-carboxybiotinyl-L-lysyl-[protein] + acetyl-CoA = N(6)-biotinyl-L-lysyl-[protein] + malonyl-CoA. It participates in lipid metabolism; malonyl-CoA biosynthesis; malonyl-CoA from acetyl-CoA: step 1/1. Component of the acetyl coenzyme A carboxylase (ACC) complex. Biotin carboxylase (BC) catalyzes the carboxylation of biotin on its carrier protein (BCCP) and then the CO(2) group is transferred by the transcarboxylase to acetyl-CoA to form malonyl-CoA. The protein is Acetyl-coenzyme A carboxylase carboxyl transferase subunit beta of Hydrogenovibrio crunogenus (strain DSM 25203 / XCL-2) (Thiomicrospira crunogena).